The sequence spans 154 residues: uncharacterized protein (154 aa).

G12–T19 serves as a coordination point for GTP. One can recognise a G domain in the interval G17–K112.

It to M.thermoautotrophicum MTH765.

This is an uncharacterized protein from Methanocaldococcus jannaschii (strain ATCC 43067 / DSM 2661 / JAL-1 / JCM 10045 / NBRC 100440) (Methanococcus jannaschii).